The following is a 369-amino-acid chain: Glycine oxidase (369 aa).

Residues 14 to 15 (II), 34 to 35 (ES), 42 to 43 (AT), 47 to 49 (AGM), and V174 contribute to the FAD site. Residues R302 and R329 each contribute to the substrate site. Residue 327–333 (HFRNGIL) participates in FAD binding.

This sequence belongs to the DAO family. ThiO subfamily. In terms of assembly, homotetramer. It depends on FAD as a cofactor.

It catalyses the reaction glycine + O2 + H2O = glyoxylate + H2O2 + NH4(+). The enzyme catalyses glyphosate + O2 + H2O = aminomethylphosphonate + glyoxylate + H2O2 + H(+). It carries out the reaction N-ethylglycine + O2 + H2O = ethylamine + glyoxylate + H2O2. The catalysed reaction is sarcosine + O2 + H2O = methylamine + glyoxylate + H2O2. It catalyses the reaction D-alanine + O2 + H2O = pyruvate + H2O2 + NH4(+). It functions in the pathway cofactor biosynthesis; thiamine diphosphate biosynthesis. Catalyzes the FAD-dependent oxidative deamination of glycine, leading to glyoxylate, ammonia and hydrogen peroxide. Is also able to act on various amines and D-amino acids to yield the corresponding alpha-keto acids, ammonia/amine, and hydrogen peroxide. Can also oxidize the herbicide glyphosate (N-phosphonomethylglycine), and thus may be involved in the degradation pathway that allows B.licheniformis J33-8 to grow with glyphosate as the sole source of carbon. Is essential for thiamine biosynthesis since the oxidation of glycine catalyzed by ThiO generates the glycine imine intermediate (dehydroglycine) required for the biosynthesis of the thiazole ring of thiamine pyrophosphate. The protein is Glycine oxidase of Bacillus licheniformis.